We begin with the raw amino-acid sequence, 61 residues long: Small ribosomal subunit protein uS14 (61 aa).

Residues cysteine 24, cysteine 27, cysteine 40, and cysteine 43 each contribute to the Zn(2+) site.

It belongs to the universal ribosomal protein uS14 family. Zinc-binding uS14 subfamily. In terms of assembly, part of the 30S ribosomal subunit. Contacts proteins S3 and S10. It depends on Zn(2+) as a cofactor.

Its function is as follows. Binds 16S rRNA, required for the assembly of 30S particles and may also be responsible for determining the conformation of the 16S rRNA at the A site. The protein is Small ribosomal subunit protein uS14 of Rhodococcus erythropolis (strain PR4 / NBRC 100887).